The chain runs to 516 residues: MNALSEQILFELRHLLSEMSDGGSVGPSVYDTARALQFGGNVTGRQDAYAWLLAQQQADGGWGSADFPLFRHAPTWAALLALQRADPLPGAADAVQAATRFLERQADPYAHAVPEDAPIGAELILPQLCGEAASLLGGVAFPRHPALLPLRQACLVKLGAVATLPSGHPLLHSWEAWGTWPTAACPDDDGSIGISPAATAAWRAHAVTQGSTPQVGRADAYLQAASRATRSGIEGVVPNVWPINVFEPCWSLYTLHLAGLFAHPALDEAVRVIVAQLDARLGVRGLGPALHFAADADDTAVALCVLRLAGRDPAVDALRHFEIGELFVTFPGERNASVSTNIHALHALRLLGKPAAGTSAYVEANRNPHGLWDNEKWHVSWLYPTAHAVAALAQGKPQWRDERALAALLQAQRDDGGWGAGRASTFEETAYALFALHVMDGSEEPTGRRRIAQAVARALEWMLARHAAPALPQMPLWIGKELYCPIRVVRVAELAGLWLALRWGPRVPAEGAGAAP.

PFTB repeat units lie at residues 45–86 and 401–443; these read RQDA…QRAD and DERA…DGSE.

This is an uncharacterized protein from Sinorhizobium fredii (strain NBRC 101917 / NGR234).